The following is a 200-amino-acid chain: MSEALTELASYLGEARGNLIAASQMKYGELTLTTTGENLIALLTFLRDDAKCGFVNLIDICGVDWPQRELRFDVVYHLLSPKQNVRIRVKVATDEDTPVPSACAVHPGADWFERETWDMYGVLFTGHPDLRRILTDYGFEGHPLRKDFPTTGFVEVRYDDAAKRVVYEPVELKQEFRNFDFMSPWEGTDYVLPGDEKAKQ.

Belongs to the complex I 30 kDa subunit family. In terms of assembly, NDH-1 is composed of 14 different subunits. Subunits NuoB, C, D, E, F, and G constitute the peripheral sector of the complex.

The protein resides in the cell inner membrane. The enzyme catalyses a quinone + NADH + 5 H(+)(in) = a quinol + NAD(+) + 4 H(+)(out). NDH-1 shuttles electrons from NADH, via FMN and iron-sulfur (Fe-S) centers, to quinones in the respiratory chain. The immediate electron acceptor for the enzyme in this species is believed to be ubiquinone. Couples the redox reaction to proton translocation (for every two electrons transferred, four hydrogen ions are translocated across the cytoplasmic membrane), and thus conserves the redox energy in a proton gradient. This is NADH-quinone oxidoreductase subunit C from Rhizobium leguminosarum bv. trifolii (strain WSM2304).